We begin with the raw amino-acid sequence, 142 residues long: Putative pre-16S rRNA nuclease (142 aa).

This sequence belongs to the YqgF nuclease family.

Its subcellular location is the cytoplasm. Functionally, could be a nuclease involved in processing of the 5'-end of pre-16S rRNA. This chain is Putative pre-16S rRNA nuclease, found in Staphylococcus carnosus (strain TM300).